The sequence spans 364 residues: Aminomethyltransferase (364 aa).

Belongs to the GcvT family. The glycine cleavage system is composed of four proteins: P, T, L and H.

It catalyses the reaction N(6)-[(R)-S(8)-aminomethyldihydrolipoyl]-L-lysyl-[protein] + (6S)-5,6,7,8-tetrahydrofolate = N(6)-[(R)-dihydrolipoyl]-L-lysyl-[protein] + (6R)-5,10-methylene-5,6,7,8-tetrahydrofolate + NH4(+). Functionally, the glycine cleavage system catalyzes the degradation of glycine. This Salmonella paratyphi B (strain ATCC BAA-1250 / SPB7) protein is Aminomethyltransferase.